The sequence spans 243 residues: Leucyl/phenylalanyl-tRNA--protein transferase (243 aa).

The tract at residues 1–22 (MHSQPYLLSPTPNTPFPPAEHA) is disordered.

This sequence belongs to the L/F-transferase family.

The protein localises to the cytoplasm. It catalyses the reaction N-terminal L-lysyl-[protein] + L-leucyl-tRNA(Leu) = N-terminal L-leucyl-L-lysyl-[protein] + tRNA(Leu) + H(+). The catalysed reaction is N-terminal L-arginyl-[protein] + L-leucyl-tRNA(Leu) = N-terminal L-leucyl-L-arginyl-[protein] + tRNA(Leu) + H(+). It carries out the reaction L-phenylalanyl-tRNA(Phe) + an N-terminal L-alpha-aminoacyl-[protein] = an N-terminal L-phenylalanyl-L-alpha-aminoacyl-[protein] + tRNA(Phe). Its function is as follows. Functions in the N-end rule pathway of protein degradation where it conjugates Leu, Phe and, less efficiently, Met from aminoacyl-tRNAs to the N-termini of proteins containing an N-terminal arginine or lysine. The chain is Leucyl/phenylalanyl-tRNA--protein transferase from Xylella fastidiosa (strain M23).